The sequence spans 54 residues: Ribulose bisphosphate carboxylase large chain (54 aa).

Positions 1–2 (MS) are excised as a propeptide. An N-acetylproline modification is found at proline 3. Residue lysine 14 is modified to N6,N6,N6-trimethyllysine.

The protein belongs to the RuBisCO large chain family. Type I subfamily. As to quaternary structure, heterohexadecamer of 8 large chains and 8 small chains.

It localises to the plastid. Its subcellular location is the chloroplast. It carries out the reaction 2 (2R)-3-phosphoglycerate + 2 H(+) = D-ribulose 1,5-bisphosphate + CO2 + H2O. The catalysed reaction is D-ribulose 1,5-bisphosphate + O2 = 2-phosphoglycolate + (2R)-3-phosphoglycerate + 2 H(+). Functionally, ruBisCO catalyzes two reactions: the carboxylation of D-ribulose 1,5-bisphosphate, the primary event in carbon dioxide fixation, as well as the oxidative fragmentation of the pentose substrate in the photorespiration process. Both reactions occur simultaneously and in competition at the same active site. This is Ribulose bisphosphate carboxylase large chain (rbcL) from Ilex ciliospinosa (Sichuan holly).